The following is a 254-amino-acid chain: tRNA pseudouridine synthase A (254 aa).

Residue D52 is the Nucleophile of the active site. Y110 contributes to the substrate binding site.

The protein belongs to the tRNA pseudouridine synthase TruA family. In terms of assembly, homodimer.

It carries out the reaction uridine(38/39/40) in tRNA = pseudouridine(38/39/40) in tRNA. Its function is as follows. Formation of pseudouridine at positions 38, 39 and 40 in the anticodon stem and loop of transfer RNAs. The polypeptide is tRNA pseudouridine synthase A (Thermodesulfovibrio yellowstonii (strain ATCC 51303 / DSM 11347 / YP87)).